Reading from the N-terminus, the 625-residue chain is tRNA uridine 5-carboxymethylaminomethyl modification enzyme MnmG (625 aa).

FAD is bound by residues 11–16 (GAGHAG), Val-123, and Ser-178. An NAD(+)-binding site is contributed by 271-285 (GPRYCPSIETKIVTF). An FAD-binding site is contributed by Gln-368.

It belongs to the MnmG family. As to quaternary structure, homodimer. Heterotetramer of two MnmE and two MnmG subunits. The cofactor is FAD.

The protein localises to the cytoplasm. Its function is as follows. NAD-binding protein involved in the addition of a carboxymethylaminomethyl (cmnm) group at the wobble position (U34) of certain tRNAs, forming tRNA-cmnm(5)s(2)U34. This chain is tRNA uridine 5-carboxymethylaminomethyl modification enzyme MnmG, found in Bacteroides fragilis (strain YCH46).